Here is a 386-residue protein sequence, read N- to C-terminus: MHLHEYQAKDLLTAYQLPIPPYHVATSVPEVETAIQAEQWKAGVVKAQVHAGGRGKNGGVVIAHSPEDLLAAADKLLHMQFSSNQTAGLSLPINKVLISPLVEIASEYYLAIVIDRKHRCPVIMLSKAGGVDIEEVAEKQPDQLLKMTLPSSGKIYGYQLRRIAKFMEWDQPIADQGNRIIRQLLQCFYEKDASLLEINPLVLTKDGSLVILDAKMTIDDNALYRHPQLADCYDPSQENIRDVLAKQLGLSYIALDGTIGCLVNGAGLAMSTLDILKLYGGSAANFLDVGGSASEKQIQEAISLVLSDKSVRVLFIHIFGGIMDCAVVASGLVSAMQGQKETIPTVIRLEGTNVDKGKDMIINAGIPCEFVTSMSEGAELAVQLSR.

The ATP-grasp domain maps to 9–244; the sequence is KDLLTAYQLP…PSQENIRDVL (236 aa). Residues lysine 46, 53 to 55, valine 102, and glutamate 107 each bind ATP; that span reads GRG. Residues asparagine 199 and aspartate 213 each coordinate Mg(2+). Residues asparagine 264 and 321–323 contribute to the substrate site; that span reads GIM.

This sequence belongs to the succinate/malate CoA ligase beta subunit family. As to quaternary structure, heterotetramer of two alpha and two beta subunits. Mg(2+) is required as a cofactor.

The enzyme catalyses succinate + ATP + CoA = succinyl-CoA + ADP + phosphate. It catalyses the reaction GTP + succinate + CoA = succinyl-CoA + GDP + phosphate. Its pathway is carbohydrate metabolism; tricarboxylic acid cycle; succinate from succinyl-CoA (ligase route): step 1/1. Its function is as follows. Succinyl-CoA synthetase functions in the citric acid cycle (TCA), coupling the hydrolysis of succinyl-CoA to the synthesis of either ATP or GTP and thus represents the only step of substrate-level phosphorylation in the TCA. The beta subunit provides nucleotide specificity of the enzyme and binds the substrate succinate, while the binding sites for coenzyme A and phosphate are found in the alpha subunit. The protein is Succinate--CoA ligase [ADP-forming] subunit beta of Chlamydia trachomatis serovar A (strain ATCC VR-571B / DSM 19440 / HAR-13).